The sequence spans 340 residues: Ferrochelatase (340 aa).

Fe cation contacts are provided by His189 and Glu292.

This sequence belongs to the ferrochelatase family.

Its subcellular location is the cytoplasm. The enzyme catalyses heme b + 2 H(+) = protoporphyrin IX + Fe(2+). It participates in porphyrin-containing compound metabolism; protoheme biosynthesis; protoheme from protoporphyrin-IX: step 1/1. Catalyzes the ferrous insertion into protoporphyrin IX. This chain is Ferrochelatase, found in Pseudomonas aeruginosa (strain LESB58).